The primary structure comprises 629 residues: tRNA uridine 5-carboxymethylaminomethyl modification enzyme MnmG (629 aa).

Residues 14–19, Val126, and Ser181 each bind FAD; that span reads GAGHAG. 273–287 is an NAD(+) binding site; that stretch reads GPRYCPSIEDKVVRF. Residue Gln370 participates in FAD binding.

The protein belongs to the MnmG family. Homodimer. Heterotetramer of two MnmE and two MnmG subunits. The cofactor is FAD.

Its subcellular location is the cytoplasm. Functionally, NAD-binding protein involved in the addition of a carboxymethylaminomethyl (cmnm) group at the wobble position (U34) of certain tRNAs, forming tRNA-cmnm(5)s(2)U34. In Geobacillus kaustophilus (strain HTA426), this protein is tRNA uridine 5-carboxymethylaminomethyl modification enzyme MnmG.